We begin with the raw amino-acid sequence, 251 residues long: uncharacterized protein (251 aa).

To M.jannaschii MJ0638 and MJ1123 and M.tuberculosis Rv2003c.

This is an uncharacterized protein from Methanocaldococcus jannaschii (strain ATCC 43067 / DSM 2661 / JAL-1 / JCM 10045 / NBRC 100440) (Methanococcus jannaschii).